We begin with the raw amino-acid sequence, 21 residues long: Dahlein-5.5 (21 aa).

In terms of tissue distribution, expressed by the skin dorsal glands.

It localises to the secreted. Functionally, has no antimicrobial activity. Strongly inhibits the formation of NO by neuronal nitric oxide synthase at micromolar concentrations. The sequence is that of Dahlein-5.5 from Ranoidea dahlii (Dahl's aquatic frog).